A 73-amino-acid polypeptide reads, in one-letter code: Small ribosomal subunit protein bS18 (73 aa).

It belongs to the bacterial ribosomal protein bS18 family. As to quaternary structure, part of the 30S ribosomal subunit. Forms a tight heterodimer with protein bS6.

In terms of biological role, binds as a heterodimer with protein bS6 to the central domain of the 16S rRNA, where it helps stabilize the platform of the 30S subunit. The protein is Small ribosomal subunit protein bS18 of Prochlorococcus marinus subsp. pastoris (strain CCMP1986 / NIES-2087 / MED4).